The sequence spans 265 residues: HUWE1-associated protein modifying stress responses (265 aa).

Disordered stretches follow at residues 1-22 (MEDK…HWFS), 145-170 (RNSR…GSSV), 195-218 (VRSS…RRNG), and 240-265 (GTRK…NRMI). 2 stretches are compositionally biased toward polar residues: residues 156–170 (VSPN…GSSV) and 195–212 (VRSS…SSNT).

Belongs to the TAPR1 family. As to quaternary structure, oligomer.

Its subcellular location is the nucleus. It is found in the cytoplasm. Functionally, acts as a central player within a network of stress response pathways promoting cellular adaptability. Functions as a negative regulator of TP53/P53 in the cellular response to telomere erosion and probably also DNA damage. This Xenopus laevis (African clawed frog) protein is HUWE1-associated protein modifying stress responses.